Here is a 355-residue protein sequence, read N- to C-terminus: Peptide chain release factor 1 (355 aa).

Q233 is modified (N5-methylglutamine).

It belongs to the prokaryotic/mitochondrial release factor family. Post-translationally, methylated by PrmC. Methylation increases the termination efficiency of RF1.

The protein resides in the cytoplasm. Peptide chain release factor 1 directs the termination of translation in response to the peptide chain termination codons UAG and UAA. In Amoebophilus asiaticus (strain 5a2), this protein is Peptide chain release factor 1.